Reading from the N-terminus, the 54-residue chain is uncharacterized protein (54 aa).

It to B.subtilis XkdX.

This is an uncharacterized protein from Bacillus subtilis (strain 168).